Consider the following 136-residue polypeptide: MKQLAQRLFSLALVLALVLGISVQSAQALSLQSPLLAVAEAEIRNEADAQRIEAGGKLDLNNIGVRAFQQFPGMYPYLASKIVLGGPYDSVDDVLKLDLSDRQREVFEQYKENFTVTPPRDALNEGDDRINNGIYR.

The N-terminal stretch at 1–28 is a signal peptide; that stretch reads MKQLAQRLFSLALVLALVLGISVQSAQA.

This sequence belongs to the PsbU family. As to quaternary structure, PSII is composed of 1 copy each of membrane proteins PsbA, PsbB, PsbC, PsbD, PsbE, PsbF, PsbH, PsbI, PsbJ, PsbK, PsbL, PsbM, PsbT, PsbX, PsbY, PsbZ, Psb30/Ycf12, peripheral proteins PsbO, CyanoQ (PsbQ), PsbU, PsbV and a large number of cofactors. It forms dimeric complexes.

It is found in the cellular thylakoid membrane. In terms of biological role, one of the extrinsic, lumenal subunits of photosystem II (PSII). PSII is a light-driven water plastoquinone oxidoreductase, using light energy to abstract electrons from H(2)O, generating a proton gradient subsequently used for ATP formation. The extrinsic proteins stabilize the structure of photosystem II oxygen-evolving complex (OEC), the ion environment of oxygen evolution and protect the OEC against heat-induced inactivation. In Synechococcus elongatus (strain ATCC 33912 / PCC 7942 / FACHB-805) (Anacystis nidulans R2), this protein is Photosystem II extrinsic protein U.